Reading from the N-terminus, the 464-residue chain is MYICLLTLVLIHAAAAFVAQNATGILAGKDHCVCEVLLPDSSFPAKRVGALEDETIRLSNRVEDEMQKLEEQDIILDTYSEKIINLTRRVEYLEKLHPESLVEISFEVLKREIRELEMYISAMRVKPNGNSVQVETLYNEVKNMSKTVGQLETLDKNNVLQAKREIVNLKKRLVDCEKNLKAKPSLMVPLGSCQHQGLAHISKPNLMQLNWKGNAYKSGAWGKDAAWNTTKKSLYWVAPLNTDGRVLESIRIYPSMSDLQMYKNPIDLPLSMLIKNKLNNTFAGQGAGVVVHNNNLYYNCFNSHDMCRASLTSGVYQKKPLLNALFNNRFSYAGTMFQDMDFSSDEKGLWVIFTTEKSAGKIVVGKVNVATFTVDNIWITTQNKSDASNAFMICGVLYVTRSLGPKMEEVFYMFDTKTGKEGHLSIMMEKMAEKVHSLSYNSNDRKLYMFSEGYLLHYDIALKP.

Positions 1-16 are cleaved as a signal peptide; it reads MYICLLTLVLIHAAAA. N-linked (GlcNAc...) asparagine glycans are attached at residues Asn21, Asn85, Asn143, Asn228, Asn279, and Asn383. Residues 192 to 464 enclose the Olfactomedin-like domain; the sequence is SCQHQGLAHI…LLHYDIALKP (273 aa). Cysteines 193 and 394 form a disulfide.

In terms of assembly, oligomer; disulfide-linked. In terms of processing, most, if not all, of the six potential sites for N-glycosylation carry carbohydrate moieties of 8-10 sugar residues. Expressed exclusively in olfactory neuroepithelium.

It localises to the secreted. The protein resides in the extracellular space. Functionally, may influence the maintenance, growth, or differentiation of chemosensory cilia on the apical dendrites of olfactory neurons. Major component of the extracellular matrix of the olfactory neuroepithelium. This Aquarana catesbeiana (American bullfrog) protein is Olfactomedin.